The primary structure comprises 394 residues: Elongation factor Tu 2 (394 aa).

In terms of domain architecture, tr-type G spans 10-204 (KPHVNVGTIG…ALDNYIPEPE (195 aa)). The segment at 19–26 (GHVDHGKT) is G1. 19–26 (GHVDHGKT) is a binding site for GTP. Thr26 is a Mg(2+) binding site. Positions 60 to 64 (GITIS) are G2. Positions 81-84 (DCPG) are G3. Residues 81-85 (DCPGH) and 136-139 (NKCD) contribute to the GTP site. Residues 136–139 (NKCD) are G4. Residues 174-176 (SAL) form a G5 region.

The protein belongs to the TRAFAC class translation factor GTPase superfamily. Classic translation factor GTPase family. EF-Tu/EF-1A subfamily. In terms of assembly, monomer.

The protein localises to the cytoplasm. It carries out the reaction GTP + H2O = GDP + phosphate + H(+). GTP hydrolase that promotes the GTP-dependent binding of aminoacyl-tRNA to the A-site of ribosomes during protein biosynthesis. The protein is Elongation factor Tu 2 of Photobacterium profundum (strain SS9).